Consider the following 289-residue polypeptide: Rhodopsin (289 aa).

Over 1–7 the chain is Extracellular; it reads YLVNPAA. The chain crosses the membrane as a helical span at residues 8-32; the sequence is YAALGAYMFLLILIGFPVNFLTLYV. Residues 33-44 are Cytoplasmic-facing; the sequence is TLEHKKLRTPLN. Residues 45–67 form a helical membrane-spanning segment; that stretch reads YILLNLAVADLFMVLGGFTTTMY. At 68-81 the chain is on the extracellular side; sequence TSMHGYFVLGRLGC. C81 and C158 form a disulfide bridge. Residues 82–104 traverse the membrane as a helical segment; the sequence is NLEGFFATLGGEIALWSLVVLAI. Residues 105–107 carry the 'Ionic lock' involved in activated form stabilization motif; sequence ERW. Topologically, residues 105 to 123 are cytoplasmic; it reads ERWIVVCKPISNFRFTEDH. A helical transmembrane segment spans residues 124-144; sequence AIMGLAFSWVMALSCSVPPLV. Residues 145-173 are Extracellular-facing; the sequence is GWSRYIPEAMQCSCGVDYYTRAEGFNTES. A helical membrane pass occupies residues 174–195; the sequence is FVLYMFTVHFLIPLSVIFFCYG. Residues 196 to 223 are Cytoplasmic-facing; sequence RLLCAVKEAAAAQQESETTQRSEKEVSR. Residues 224-245 form a helical membrane-spanning segment; it reads MVVLMVIGFLVCWLPYASTAWW. The Extracellular portion of the chain corresponds to 246 to 257; the sequence is IFCNQGSEFGPV. A helical transmembrane segment spans residues 258–279; that stretch reads FMTIPAFFAKSSAIYNPMIYIC. An N6-(retinylidene)lysine modification is found at K267. Residues 280-289 are Cytoplasmic-facing; sequence MNKQFRHCMI.

Belongs to the G-protein coupled receptor 1 family. Opsin subfamily. Post-translationally, phosphorylated on some or all of the serine and threonine residues present in the C-terminal region. In terms of processing, contains one covalently linked retinal chromophore.

The protein localises to the membrane. Its subcellular location is the cell projection. The protein resides in the cilium. It is found in the photoreceptor outer segment. Photoreceptor required for image-forming vision at low light intensity. While most salt water fish species use retinal as chromophore, most freshwater fish use 3-dehydroretinal, or a mixture of retinal and 3-dehydroretinal. Light-induced isomerization of 11-cis to all-trans retinal triggers a conformational change that activates signaling via G-proteins. Subsequent receptor phosphorylation mediates displacement of the bound G-protein alpha subunit by arrestin and terminates signaling. The polypeptide is Rhodopsin (rho) (Comephorus dybowskii).